An 87-amino-acid chain; its full sequence is Defensin-like protein 176 (87 aa).

Residues methionine 1–glutamine 23 form the signal peptide. Intrachain disulfides connect cysteine 27/cysteine 66, cysteine 36/cysteine 55, cysteine 39/cysteine 60, and cysteine 43/cysteine 62.

Belongs to the DEFL family.

The protein resides in the secreted. This Arabidopsis thaliana (Mouse-ear cress) protein is Defensin-like protein 176 (LCR65).